A 329-amino-acid polypeptide reads, in one-letter code: MMTPNSTELSAIPMGVLGLSLALASLIVIANLLLALGIALDRHLRSPPAGCFFLSLLLAGLLTGLALPMLPGLWSRNHQGYWSCLLLHLTPNFCFLSLLANLLLVHGERYMAVLQPLRPHGSVRLALFLTWVSSLFFASLPALGWNHWSPDANCSSQAVFPAPYLYLEVYGLLLPAVGATALLSVRVLATAHRQLCEIRRLERAVCRDVPSTLARALTWRQARAQAGATLLFLLCWGPYVATLLLSVLAYERRPPLGPGTLLSLISLGSTSAAAVPVAMGLGDQRYTAPWRTAAQRCLRVLRGRAKRDNPGPSTAYHTSSQCSIDLDLN.

Residues 1 to 15 are Extracellular-facing; that stretch reads MMTPNSTELSAIPMG. A glycan (N-linked (GlcNAc...) asparagine) is linked at Asn-5. A helical membrane pass occupies residues 16-36; that stretch reads VLGLSLALASLIVIANLLLAL. The Cytoplasmic portion of the chain corresponds to 37 to 49; the sequence is GIALDRHLRSPPA. Residues 50–70 form a helical membrane-spanning segment; the sequence is GCFFLSLLLAGLLTGLALPML. At 71–84 the chain is on the extracellular side; sequence PGLWSRNHQGYWSC. Cys-84 and Cys-154 are joined by a disulfide. A helical membrane pass occupies residues 85–105; it reads LLLHLTPNFCFLSLLANLLLV. Topologically, residues 106–124 are cytoplasmic; it reads HGERYMAVLQPLRPHGSVR. Residues 125-145 form a helical membrane-spanning segment; sequence LALFLTWVSSLFFASLPALGW. The Extracellular portion of the chain corresponds to 146-164; sequence NHWSPDANCSSQAVFPAPY. Residue Asn-153 is glycosylated (N-linked (GlcNAc...) asparagine). A helical membrane pass occupies residues 165 to 185; sequence LYLEVYGLLLPAVGATALLSV. Topologically, residues 186–229 are cytoplasmic; that stretch reads RVLATAHRQLCEIRRLERAVCRDVPSTLARALTWRQARAQAGAT. The chain crosses the membrane as a helical span at residues 230–250; it reads LLFLLCWGPYVATLLLSVLAY. Residues 251–260 are Extracellular-facing; it reads ERRPPLGPGT. A helical transmembrane segment spans residues 261 to 281; sequence LLSLISLGSTSAAAVPVAMGL. The Cytoplasmic portion of the chain corresponds to 282–329; sequence GDQRYTAPWRTAAQRCLRVLRGRAKRDNPGPSTAYHTSSQCSIDLDLN.

Belongs to the G-protein coupled receptor 1 family.

It is found in the cell membrane. Receptor for bile acid. Bile acid-binding induces its internalization, activation of extracellular signal-regulated kinase and intracellular cAMP production. May be involved in the suppression of macrophage functions by bile acids. Involved in bile acid promoted GLP1R secretion. The protein is G-protein coupled bile acid receptor 1 (Gpbar1) of Mus musculus (Mouse).